Here is a 169-residue protein sequence, read N- to C-terminus: Ribosome maturation factor RimM (169 aa).

In terms of domain architecture, PRC barrel spans 93–167 (PENSFFISDI…KISVILPKGL (75 aa)).

This sequence belongs to the RimM family. Binds ribosomal protein uS19.

Its subcellular location is the cytoplasm. An accessory protein needed during the final step in the assembly of 30S ribosomal subunit, possibly for assembly of the head region. Essential for efficient processing of 16S rRNA. May be needed both before and after RbfA during the maturation of 16S rRNA. It has affinity for free ribosomal 30S subunits but not for 70S ribosomes. The sequence is that of Ribosome maturation factor RimM from Ruminiclostridium cellulolyticum (strain ATCC 35319 / DSM 5812 / JCM 6584 / H10) (Clostridium cellulolyticum).